We begin with the raw amino-acid sequence, 49 residues long: Agglutinin-1 (49 aa).

In terms of assembly, homooligomer. Post-translationally, glycosylated.

Functionally, beta-galactoside specific lectin. Has a hemagglutinating activity on erythrocytes. This chain is Agglutinin-1, found in Pomacea flagellata (Apple snail).